The following is a 329-amino-acid chain: RNA-binding protein CP33, chloroplastic (329 aa).

The transit peptide at Met1–Ala69 directs the protein to the chloroplast. Residues Ala77 to Glu104 show a composition bias toward acidic residues. Disordered regions lie at residues Ala77–Arg117 and Ser296–Ala329. 2 consecutive RRM domains span residues Gly116 to Val194 and His219 to Glu297.

The protein resides in the plastid. The protein localises to the chloroplast. In terms of biological role, could be involved in splicing and/or processing of chloroplast RNAs. This chain is RNA-binding protein CP33, chloroplastic, found in Arabidopsis thaliana (Mouse-ear cress).